The primary structure comprises 317 residues: Ribosomal protein L11 methyltransferase (317 aa).

Positions 158, 179, 201, and 244 each coordinate S-adenosyl-L-methionine.

It belongs to the methyltransferase superfamily. PrmA family.

It localises to the cytoplasm. The enzyme catalyses L-lysyl-[protein] + 3 S-adenosyl-L-methionine = N(6),N(6),N(6)-trimethyl-L-lysyl-[protein] + 3 S-adenosyl-L-homocysteine + 3 H(+). In terms of biological role, methylates ribosomal protein L11. This Streptococcus pyogenes serotype M5 (strain Manfredo) protein is Ribosomal protein L11 methyltransferase.